A 251-amino-acid polypeptide reads, in one-letter code: MNEPTPLSRSFGYQSVDEREREQRIRRVFSAVAARYDLMNDLMSFGIHRLWKRRFVRMAAPQAGQHIVDLAGGTGDVAALMAAADRRVTVVDPSAEMMAVGQARGHAHVDWQVGSAEQLPLADASVDTLTISFGIRNATRIDVALREIHRVLKPGGRFLCLEFSTPAWWLRPFYNLFSFTVIPRLGAWIANSPEAYTYLVESIRRFPDQRGFAAMISAAGFESVRWHDLSFGIACVHVGTRAAAATPAGTA.

S-adenosyl-L-methionine contacts are provided by Thr74, Asp92, and Ser132.

This sequence belongs to the class I-like SAM-binding methyltransferase superfamily. MenG/UbiE family.

It carries out the reaction a 2-demethylmenaquinol + S-adenosyl-L-methionine = a menaquinol + S-adenosyl-L-homocysteine + H(+). It catalyses the reaction a 2-methoxy-6-(all-trans-polyprenyl)benzene-1,4-diol + S-adenosyl-L-methionine = a 5-methoxy-2-methyl-3-(all-trans-polyprenyl)benzene-1,4-diol + S-adenosyl-L-homocysteine + H(+). The protein operates within quinol/quinone metabolism; menaquinone biosynthesis; menaquinol from 1,4-dihydroxy-2-naphthoate: step 2/2. Its pathway is cofactor biosynthesis; ubiquinone biosynthesis. Its function is as follows. Methyltransferase required for the conversion of demethylmenaquinol (DMKH2) to menaquinol (MKH2) and the conversion of 2-polyprenyl-6-methoxy-1,4-benzoquinol (DDMQH2) to 2-polyprenyl-3-methyl-6-methoxy-1,4-benzoquinol (DMQH2). The chain is Ubiquinone/menaquinone biosynthesis C-methyltransferase UbiE from Rubrivivax gelatinosus (strain NBRC 100245 / IL144).